The primary structure comprises 100 residues: NADH-quinone oxidoreductase subunit K 2 (100 aa).

Transmembrane regions (helical) follow at residues 4–24, 28–48, and 60–80; these read LWWY…GVLI, ILVV…NFIA, and IFAI…LGIL.

The protein belongs to the complex I subunit 4L family. As to quaternary structure, NDH-1 is composed of 14 different subunits. Subunits NuoA, H, J, K, L, M, N constitute the membrane sector of the complex.

Its subcellular location is the cell inner membrane. It catalyses the reaction a quinone + NADH + 5 H(+)(in) = a quinol + NAD(+) + 4 H(+)(out). In terms of biological role, NDH-1 shuttles electrons from NADH, via FMN and iron-sulfur (Fe-S) centers, to quinones in the respiratory chain. The immediate electron acceptor for the enzyme in this species is believed to be ubiquinone. Couples the redox reaction to proton translocation (for every two electrons transferred, four hydrogen ions are translocated across the cytoplasmic membrane), and thus conserves the redox energy in a proton gradient. The sequence is that of NADH-quinone oxidoreductase subunit K 2 from Rhizobium etli (strain ATCC 51251 / DSM 11541 / JCM 21823 / NBRC 15573 / CFN 42).